The primary structure comprises 355 residues: Phosphoribosylformylglycinamidine cyclo-ligase (355 aa).

It belongs to the AIR synthase family.

The protein resides in the cytoplasm. It carries out the reaction 2-formamido-N(1)-(5-O-phospho-beta-D-ribosyl)acetamidine + ATP = 5-amino-1-(5-phospho-beta-D-ribosyl)imidazole + ADP + phosphate + H(+). It functions in the pathway purine metabolism; IMP biosynthesis via de novo pathway; 5-amino-1-(5-phospho-D-ribosyl)imidazole from N(2)-formyl-N(1)-(5-phospho-D-ribosyl)glycinamide: step 2/2. The sequence is that of Phosphoribosylformylglycinamidine cyclo-ligase from Paraburkholderia phymatum (strain DSM 17167 / CIP 108236 / LMG 21445 / STM815) (Burkholderia phymatum).